The chain runs to 335 residues: Nicotinate-nucleotide--dimethylbenzimidazole phosphoribosyltransferase (335 aa).

Glutamate 304 serves as the catalytic Proton acceptor.

It belongs to the CobT family.

It catalyses the reaction 5,6-dimethylbenzimidazole + nicotinate beta-D-ribonucleotide = alpha-ribazole 5'-phosphate + nicotinate + H(+). It functions in the pathway nucleoside biosynthesis; alpha-ribazole biosynthesis; alpha-ribazole from 5,6-dimethylbenzimidazole: step 1/2. Functionally, catalyzes the synthesis of alpha-ribazole-5'-phosphate from nicotinate mononucleotide (NAMN) and 5,6-dimethylbenzimidazole (DMB). This is Nicotinate-nucleotide--dimethylbenzimidazole phosphoribosyltransferase from Thermus thermophilus (strain ATCC 27634 / DSM 579 / HB8).